Here is a 482-residue protein sequence, read N- to C-terminus: tRNA sulfurtransferase (482 aa).

Residues 61 to 165 (LAIRDALTRI…DDRLLLIKGR (105 aa)) enclose the THUMP domain. ATP is bound by residues 183-184 (LI), lysine 265, glycine 287, and glutamine 296. Cysteine 344 and cysteine 456 are oxidised to a cystine. The 79-residue stretch at 404–482 (FGPNDVILDI…GFQNVKVYRP (79 aa)) folds into the Rhodanese domain. Catalysis depends on cysteine 456, which acts as the Cysteine persulfide intermediate.

It belongs to the ThiI family.

It is found in the cytoplasm. The enzyme catalyses [ThiI sulfur-carrier protein]-S-sulfanyl-L-cysteine + a uridine in tRNA + 2 reduced [2Fe-2S]-[ferredoxin] + ATP + H(+) = [ThiI sulfur-carrier protein]-L-cysteine + a 4-thiouridine in tRNA + 2 oxidized [2Fe-2S]-[ferredoxin] + AMP + diphosphate. The catalysed reaction is [ThiS sulfur-carrier protein]-C-terminal Gly-Gly-AMP + S-sulfanyl-L-cysteinyl-[cysteine desulfurase] + AH2 = [ThiS sulfur-carrier protein]-C-terminal-Gly-aminoethanethioate + L-cysteinyl-[cysteine desulfurase] + A + AMP + 2 H(+). It participates in cofactor biosynthesis; thiamine diphosphate biosynthesis. Functionally, catalyzes the ATP-dependent transfer of a sulfur to tRNA to produce 4-thiouridine in position 8 of tRNAs, which functions as a near-UV photosensor. Also catalyzes the transfer of sulfur to the sulfur carrier protein ThiS, forming ThiS-thiocarboxylate. This is a step in the synthesis of thiazole, in the thiamine biosynthesis pathway. The sulfur is donated as persulfide by IscS. This chain is tRNA sulfurtransferase, found in Citrobacter koseri (strain ATCC BAA-895 / CDC 4225-83 / SGSC4696).